A 497-amino-acid chain; its full sequence is Probable malate:quinone oxidoreductase (497 aa).

This sequence belongs to the MQO family. FAD is required as a cofactor.

The enzyme catalyses (S)-malate + a quinone = a quinol + oxaloacetate. It functions in the pathway carbohydrate metabolism; tricarboxylic acid cycle; oxaloacetate from (S)-malate (quinone route): step 1/1. The sequence is that of Probable malate:quinone oxidoreductase from Rhodopseudomonas palustris (strain TIE-1).